The chain runs to 99 residues: Large ribosomal subunit protein bL27 (99 aa).

Residues 1–12 constitute a propeptide that is removed on maturation; sequence MMINNLEALKLF. The segment at 15–36 is disordered; that stretch reads HKGGGSTANGRNSAGRRLGAKR.

It belongs to the bacterial ribosomal protein bL27 family. Post-translationally, the N-terminus is cleaved by ribosomal processing cysteine protease Prp.

The polypeptide is Large ribosomal subunit protein bL27 (Lactobacillus johnsonii (strain CNCM I-12250 / La1 / NCC 533)).